The sequence spans 107 residues: Putative ATP synthase subunit f, mitochondrial (107 aa).

Belongs to the ATPase F chain family. In terms of assembly, F-type ATPases have 2 components, CF(1) - the catalytic core - and CF(0) - the membrane proton channel. CF(0) seems to have nine subunits: a, b, c, d, e, f, g, F6 and 8 (or A6L).

The protein localises to the mitochondrion membrane. Mitochondrial membrane ATP synthase (F(1)F(0) ATP synthase or Complex V) produces ATP from ADP in the presence of a proton gradient across the membrane which is generated by electron transport complexes of the respiratory chain. F-type ATPases consist of two structural domains, F(1) - containing the extramembraneous catalytic core and F(0) - containing the membrane proton channel, linked together by a central stalk and a peripheral stalk. During catalysis, ATP synthesis in the catalytic domain of F(1) is coupled via a rotary mechanism of the central stalk subunits to proton translocation. Part of the complex F(0) domain. Minor subunit located with subunit a in the membrane. This Drosophila melanogaster (Fruit fly) protein is Putative ATP synthase subunit f, mitochondrial.